A 315-amino-acid polypeptide reads, in one-letter code: tRNA pseudouridine synthase B (315 aa).

His42 serves as a coordination point for substrate. Asp47 serves as the catalytic Nucleophile. Substrate-binding residues include Tyr75, Tyr178, and Leu199.

The protein belongs to the pseudouridine synthase TruB family. Type 1 subfamily.

It carries out the reaction uridine(55) in tRNA = pseudouridine(55) in tRNA. In terms of biological role, responsible for synthesis of pseudouridine from uracil-55 in the psi GC loop of transfer RNAs. The protein is tRNA pseudouridine synthase B of Photorhabdus laumondii subsp. laumondii (strain DSM 15139 / CIP 105565 / TT01) (Photorhabdus luminescens subsp. laumondii).